A 180-amino-acid polypeptide reads, in one-letter code: Large ribosomal subunit protein uL5 (180 aa).

It belongs to the universal ribosomal protein uL5 family. In terms of assembly, part of the 50S ribosomal subunit; part of the 5S rRNA/L5/L18/L25 subcomplex. Contacts the 5S rRNA and the P site tRNA. Forms a bridge to the 30S subunit in the 70S ribosome.

This is one of the proteins that bind and probably mediate the attachment of the 5S RNA into the large ribosomal subunit, where it forms part of the central protuberance. In the 70S ribosome it contacts protein S13 of the 30S subunit (bridge B1b), connecting the 2 subunits; this bridge is implicated in subunit movement. Contacts the P site tRNA; the 5S rRNA and some of its associated proteins might help stabilize positioning of ribosome-bound tRNAs. This chain is Large ribosomal subunit protein uL5, found in Anaeromyxobacter dehalogenans (strain 2CP-1 / ATCC BAA-258).